The following is a 119-amino-acid chain: Large ribosomal subunit protein bL19 (119 aa).

This sequence belongs to the bacterial ribosomal protein bL19 family.

Functionally, this protein is located at the 30S-50S ribosomal subunit interface and may play a role in the structure and function of the aminoacyl-tRNA binding site. In Saccharopolyspora erythraea (strain ATCC 11635 / DSM 40517 / JCM 4748 / NBRC 13426 / NCIMB 8594 / NRRL 2338), this protein is Large ribosomal subunit protein bL19.